Here is a 579-residue protein sequence, read N- to C-terminus: Pentatricopeptide repeat-containing protein At2g15690, mitochondrial (579 aa).

The N-terminal 49 residues, Met1–Leu49, are a transit peptide targeting the mitochondrion. 2 stretches are compositionally biased toward polar residues: residues Asn56–Gln71 and Ser78–Gly103. The tract at residues Asn56–Ser208 is disordered. Low complexity-rich tracts occupy residues Gly117–Gln136 and Arg148–Gln199. PPR repeat units lie at residues Asp235–Gly269, Asp270–Lys300, Asp301–Pro335, Asn336–Pro371, and Lys372–Glu402. Residues Gly485–Trp579 form a type DYW motif region.

Belongs to the PPR family. PCMP-H subfamily.

The protein resides in the mitochondrion. In Arabidopsis thaliana (Mouse-ear cress), this protein is Pentatricopeptide repeat-containing protein At2g15690, mitochondrial (PCMP-H66).